The following is a 181-amino-acid chain: NADH-quinone oxidoreductase subunit B (181 aa).

Cysteine 45, cysteine 46, cysteine 111, and cysteine 140 together coordinate [4Fe-4S] cluster.

The protein belongs to the complex I 20 kDa subunit family. As to quaternary structure, NDH-1 is composed of 15 different subunits. Subunits NuoB, C, D, E, F, and G constitute the peripheral sector of the complex. [4Fe-4S] cluster serves as cofactor.

It is found in the cell membrane. The enzyme catalyses a quinone + NADH + 5 H(+)(in) = a quinol + NAD(+) + 4 H(+)(out). Functionally, NDH-1 shuttles electrons from NADH, via FMN and iron-sulfur (Fe-S) centers, to quinones in the respiratory chain. The immediate electron acceptor for the enzyme in this species is believed to be a menaquinone. Couples the redox reaction to proton translocation (for every two electrons transferred, four hydrogen ions are translocated across the cytoplasmic membrane), and thus conserves the redox energy in a proton gradient. This chain is NADH-quinone oxidoreductase subunit B, found in Deinococcus radiodurans (strain ATCC 13939 / DSM 20539 / JCM 16871 / CCUG 27074 / LMG 4051 / NBRC 15346 / NCIMB 9279 / VKM B-1422 / R1).